A 232-amino-acid polypeptide reads, in one-letter code: Orotidine 5'-phosphate decarboxylase (232 aa).

Substrate is bound by residues D11, K32, 59–68, T116, R178, Q188, G208, and R209; that span reads DLKLHDIPHT. K61 (proton donor) is an active-site residue.

Belongs to the OMP decarboxylase family. Type 1 subfamily. As to quaternary structure, homodimer.

The catalysed reaction is orotidine 5'-phosphate + H(+) = UMP + CO2. It participates in pyrimidine metabolism; UMP biosynthesis via de novo pathway; UMP from orotate: step 2/2. Its function is as follows. Catalyzes the decarboxylation of orotidine 5'-monophosphate (OMP) to uridine 5'-monophosphate (UMP). The sequence is that of Orotidine 5'-phosphate decarboxylase from Synechococcus sp. (strain JA-3-3Ab) (Cyanobacteria bacterium Yellowstone A-Prime).